An 855-amino-acid chain; its full sequence is DNA mismatch repair protein MutS (855 aa).

616–623 provides a ligand contact to ATP; that stretch reads GPNMGGKS.

Belongs to the DNA mismatch repair MutS family.

Its function is as follows. This protein is involved in the repair of mismatches in DNA. It is possible that it carries out the mismatch recognition step. This protein has a weak ATPase activity. The sequence is that of DNA mismatch repair protein MutS from Salmonella paratyphi A (strain ATCC 9150 / SARB42).